The primary structure comprises 154 residues: SsrA-binding protein (154 aa).

The protein belongs to the SmpB family.

Its subcellular location is the cytoplasm. Its function is as follows. Required for rescue of stalled ribosomes mediated by trans-translation. Binds to transfer-messenger RNA (tmRNA), required for stable association of tmRNA with ribosomes. tmRNA and SmpB together mimic tRNA shape, replacing the anticodon stem-loop with SmpB. tmRNA is encoded by the ssrA gene; the 2 termini fold to resemble tRNA(Ala) and it encodes a 'tag peptide', a short internal open reading frame. During trans-translation Ala-aminoacylated tmRNA acts like a tRNA, entering the A-site of stalled ribosomes, displacing the stalled mRNA. The ribosome then switches to translate the ORF on the tmRNA; the nascent peptide is terminated with the 'tag peptide' encoded by the tmRNA and targeted for degradation. The ribosome is freed to recommence translation, which seems to be the essential function of trans-translation. This is SsrA-binding protein from Solidesulfovibrio magneticus (strain ATCC 700980 / DSM 13731 / RS-1) (Desulfovibrio magneticus).